A 265-amino-acid polypeptide reads, in one-letter code: Polyglutamine-binding protein 1 (265 aa).

One can recognise a WW domain in the interval 46-80 (EGLPPSWYKVFDPSCGLPYYWNADTDLVSWLSPHD). At Ser-94 the chain carries Phosphoserine. A disordered region spans residues 94-265 (SSNADAEEKL…AEASRTKQQD (172 aa)). The span at 99–175 (AEEKLDRSHD…DKADREEGKE (77 aa)) shows a compositional bias: basic and acidic residues. Repeat copies occupy residues 104–110 (DRSHDKS), 111–117 (DRGHDKS), 118–124 (DRSHEKP), 125–131 (DRGHDKS), 132–138 (DRGHDKS), 139–140 (DR), 141–142 (DR), 143–144 (ER), 150–151 (DR), 152–153 (ER), 154–155 (ER), 156–157 (DR), 158–159 (ER), 160–161 (DR), and 162–163 (DR). A 5 X 7 AA approximate tandem repeats of D-R-[SG]-H-D-K-S region spans residues 104–138 (DRSHDKSDRGHDKSDRSHEKPDRGHDKSDRGHDKS). The interval 139–144 (DRDRER) is 3 X 2 AA tandem repeats of [DE]-R. Residues 150–163 (DRERERDRERDRDR) are 7 X 2 AA tandem repeats of [DE]-R. Residues 245–255 (YPSPGAVLRAN) form an important for interaction with TXNL4A region. Phosphoserine is present on Ser-247.

As to quaternary structure, interacts with POU3F2/Brn-2, ATXN1, TXNL4A, HTT and AR. Interaction with ATXN1 correlates positively with the length of the polyglutamine tract. Interacts with RNA polymerase II large subunit in a phosphorylation-dependent manner. Forms a ternary complex with ATXN1 mutant and phosphorylated RNA polymerase II. Interacts (via C-terminus) with TXNL4A and CD2BP2. Interacts (via WW domain) with ATN1 and SF3B1, and may interact with additional splice factors. Interacts (via WW domain) with WBP11; Leading to reduce interaction between PQBP1 and TXNL4A. Interacts with CAPRIN1. Interacts with DDX1. Interacts with SFPQ. Interacts with KHSRP.

It localises to the nucleus. The protein localises to the nucleus speckle. It is found in the cytoplasmic granule. In terms of biological role, intrinsically disordered protein that acts as a scaffold, and which is involved in different processes, such as pre-mRNA splicing, transcription regulation, innate immunity and neuron development. Interacts with splicing-related factors via the intrinsically disordered region and regulates alternative splicing of target pre-mRNA species. May suppress the ability of POU3F2 to transactivate the DRD1 gene in a POU3F2 dependent manner. Can activate transcription directly or via association with the transcription machinery. May be involved in ATXN1 mutant-induced cell death. The interaction with ATXN1 mutant reduces levels of phosphorylated RNA polymerase II large subunit. Involved in the assembly of cytoplasmic stress granule, possibly by participating in the transport of neuronal RNA granules. Also acts as an innate immune sensor of infection by retroviruses, by detecting the presence of reverse-transcribed DNA in the cytosol. Directly binds retroviral reverse-transcribed DNA in the cytosol and interacts with CGAS, leading to activate the cGAS-STING signaling pathway, triggering type-I interferon production. The protein is Polyglutamine-binding protein 1 (PQBP1) of Pongo pygmaeus (Bornean orangutan).